A 508-amino-acid polypeptide reads, in one-letter code: Maturase K (508 aa).

Belongs to the intron maturase 2 family. MatK subfamily.

The protein localises to the plastid. It localises to the chloroplast. Functionally, usually encoded in the trnK tRNA gene intron. Probably assists in splicing its own and other chloroplast group II introns. The sequence is that of Maturase K from Antirrhinum majus (Garden snapdragon).